A 1893-amino-acid polypeptide reads, in one-letter code: CDK5 regulatory subunit-associated protein 2 (1893 aa).

Positions 51–94 (TVSPTRARNMKDFENQITELKKENFNLKLRIYFLEERMQQEFHG) are CM1 motif; interacts with the gTuRC. The segment at 58–196 (RNMKDFENQI…TEKALRLRLE (139 aa)) is interaction with NCKAP5L. Ser-547 carries the post-translational modification Phosphoserine. Positions 926–1208 (PGVTNREAKK…LENLKQQLEE (283 aa)) are interaction with MAPRE1. Phosphothreonine is present on Thr-1001. A disordered region spans residues 1015–1071 (AAYQDSPGEQKGIKTTSSVWRDKEMDSDQQTSYEIDSEICPPDDLASLPSCKENPED). Positions 1196 to 1893 (SRVLENLKQQ…GTCSPSRPGS (698 aa)) are interaction with PCNT and AKAP9. Position 1238 is a phosphoserine (Ser-1238). 2 disordered regions span residues 1347-1381 (LPESPEPSASHALSDYETSEKSFFSQDQKQDNETE) and 1467-1486 (IKGSRDKQKENDKLRESLSR). A compositionally biased stretch (basic and acidic residues) spans 1469–1486 (GSRDKQKENDKLRESLSR). A Phosphoserine modification is found at Ser-1490. The segment covering 1500-1519 (SVKEENERLQKEGSEKERHN) has biased composition (basic and acidic residues). Residues 1500-1521 (SVKEENERLQKEGSEKERHNQQ) form a disordered region. Residues Ser-1663 and Ser-1666 each carry the phosphoserine modification. 2 disordered regions span residues 1675 to 1706 (AVTPKSVSETPPLSGNDTDSLSCDSGSSATST) and 1752 to 1774 (DVQTQEAPSSTSQELGTKGPHPA). The interaction with CDK5R1 stretch occupies residues 1726 to 1768 (HVLGLIEDYEALLKQISQGQRLLAEMDVQTQEAPSSTSQELGT). The span at 1753 to 1766 (VQTQEAPSSTSQEL) shows a compositional bias: polar residues. The tract at residues 1861-1870 (VVTHKILRKA) is required for centrosomal attachment, Golgi localization and CALM1 interaction. Positions 1874–1893 (LELRPGGSHPGTCSPSRPGS) are disordered. A compositionally biased stretch (polar residues) spans 1884–1893 (GTCSPSRPGS). Ser-1893 carries the post-translational modification Phosphoserine.

As to quaternary structure, homodimer. Interacts with CDK5R1 (p35 form). CDK5RAP1, CDK5RAP2 and CDK5RAP3 show competitive binding to CDK5R1. May form a complex with CDK5R1 and CDK5. Interacts with pericentrin/PCNT; the interaction is leading to centrosomal and Golgi localization of CDK5RAP2 and PCNT. Interacts with AKAP9; the interaction targets CDK5RAP2 and AKAP9 to Golgi apparatus. Interacts with MAPRE1; the interaction is direct and targets CDK5RAP2 and EB1/MAPRE1 to microtubule plus ends. Interacts with TUBG1; the interaction is leading to the centrosomal localization of CDK5RAP2 and TUBG1. Interacts with TUBGCP3. Interacts with CALM1. Interacts with CDC20. Interacts with CEP68; degradation of CEP68 in early mitosis leads to removal of CDK5RAP2 from the centrosome which promotes centriole disengagement and subsequent centriole separation. Interacts with NCKAP5L. Forms a pericentrosomal complex with AKAP9, MAPRE1 and PDE4DIP isoform 13/MMG8/SMYLE; within this complex, MAPRE1 binding to CDK5RAP2 may be mediated by PDE4DIP. Interacts with LGALS3BP; this interaction may connect the pericentrosomal complex to the gamma-tubulin ring complex (gTuRC) to promote microtubule assembly and acetylation. Interacts with CCDC66. Associates (via CM1 motif) with TUBGCP2 of the gTuRC; the interaction plays a role in gTuRC activation. In terms of processing, phosphorylated in vitro by CDK5.

The protein resides in the cytoplasm. Its subcellular location is the cytoskeleton. The protein localises to the microtubule organizing center. It localises to the centrosome. It is found in the golgi apparatus. In terms of biological role, potential regulator of CDK5 activity via its interaction with CDK5R1. Negative regulator of centriole disengagement (licensing) which maintains centriole engagement and cohesion. Involved in regulation of mitotic spindle orientation. Plays a role in the spindle checkpoint activation by acting as a transcriptional regulator of both BUBR1 and MAD2 promoter. Together with EB1/MAPRE1, may promote microtubule polymerization, bundle formation, growth and dynamics at the plus ends. Regulates centrosomal maturation by recruitment of the gamma-tubulin ring complex (gTuRC) onto centrosomes. In complex with PDE4DIP isoform 13/MMG8/SMYLE, MAPRE1 and AKAP9, contributes to microtubules nucleation and extension from the centrosome to the cell periphery. Required for the recruitment of AKAP9 to centrosomes. Plays a role in neurogenesis. The chain is CDK5 regulatory subunit-associated protein 2 (CDK5RAP2) from Pan troglodytes (Chimpanzee).